The chain runs to 81 residues: MSYYGSYYGGLGYGCGGFGGLGYGYGCGCGSFRRLGSGCGYGGYGYGSGFGGYGYGSGFGGYGYGCYRPSYYGGYGFSGFY.

This sequence belongs to the KRTAP type 19 family. As to quaternary structure, interacts with hair keratins.

Its function is as follows. In the hair cortex, hair keratin intermediate filaments are embedded in an interfilamentous matrix, consisting of hair keratin-associated proteins (KRTAP), which are essential for the formation of a rigid and resistant hair shaft through their extensive disulfide bond cross-linking with abundant cysteine residues of hair keratins. The matrix proteins include the high-sulfur and high-glycine-tyrosine keratins. The polypeptide is Keratin-associated protein 19-3 (KRTAP19-3) (Homo sapiens (Human)).